Consider the following 67-residue polypeptide: MAQGTVKWFNAEKGFGFISTENGQDVFAHFSAIQTSGFKTLEEGQKVAFDVEEGQRGPQAVNITKLA.

Positions 4–63 constitute a CSD domain; sequence GTVKWFNAEKGFGFISTENGQDVFAHFSAIQTSGFKTLEEGQKVAFDVEEGQRGPQAVNI.

In terms of assembly, homodimer.

The protein resides in the cytoplasm. This chain is Major cold shock protein (cspA), found in Streptococcus pyogenes serotype M6 (strain ATCC BAA-946 / MGAS10394).